A 565-amino-acid polypeptide reads, in one-letter code: Urocanate hydratase (565 aa).

NAD(+)-binding positions include 61–62 (GG), glutamine 139, 185–187 (GMG), glutamate 205, arginine 210, 251–252 (NA), 272–276 (QTSAH), 282–283 (YL), and tyrosine 331. Cysteine 419 is a catalytic residue. Residues 453–472 (LDSGSVSSPNRETESMKDGS) form a disordered region. The span at 463–472 (RETESMKDGS) shows a compositional bias: basic and acidic residues. Glycine 501 contributes to the NAD(+) binding site.

It belongs to the urocanase family. NAD(+) is required as a cofactor.

It localises to the cytoplasm. The enzyme catalyses 4-imidazolone-5-propanoate = trans-urocanate + H2O. The protein operates within amino-acid degradation; L-histidine degradation into L-glutamate; N-formimidoyl-L-glutamate from L-histidine: step 2/3. Catalyzes the conversion of urocanate to 4-imidazolone-5-propionate. The polypeptide is Urocanate hydratase (Pseudomonas syringae).